Reading from the N-terminus, the 360-residue chain is MTEKDSNVEESVLEVEQASQVELDSEQISPAEKESVLAEEKEFSTDVDIPEMTAPDDEKSAFFEQWKARHQAYLAHKDEADIQAVDEGQTEQEIPEAKKSKRVLFQGIERKTESLKSKKETGEKVQTLKVDIPSKVVWKAIPVLVTSLLLAALALYFISPTSKKKQIEVVGNERLTAEQVENYSLISPDDYNVTIALHADAYAKNIKKNSSSVETATIKFQFPATFTIHIKEYAIIGYIQQQSQWYPVLSSGEIGGEPISQDSLPEDYTTINLSDKELIKELAIELGKIDAGIRSAIQTINLPPSKVTADLLTFNMRDGNTVLVPLSEISQKVSYYTKIAAEVTVPTTIDMEVGIYRYAS.

The disordered stretch occupies residues 1 to 54 (MTEKDSNVEESVLEVEQASQVELDSEQISPAEKESVLAEEKEFSTDVDIPEMTA). Residues 1–139 (MTEKDSNVEE…VDIPSKVVWK (139 aa)) lie on the Cytoplasmic side of the membrane. Residues 17–28 (QASQVELDSEQI) show a composition bias toward polar residues. Positions 31–44 (AEKESVLAEEKEFS) are enriched in basic and acidic residues. A helical transmembrane segment spans residues 140 to 160 (AIPVLVTSLLLAALALYFISP). The Extracellular portion of the chain corresponds to 161–360 (TSKKKQIEVV…MEVGIYRYAS (200 aa)). One can recognise a POTRA domain in the interval 162-233 (SKKKQIEVVG…ATFTIHIKEY (72 aa)).

This sequence belongs to the FtsQ/DivIB family. DivIB subfamily.

It is found in the cell membrane. In terms of biological role, cell division protein that may be involved in stabilizing or promoting the assembly of the division complex. In Streptococcus suis (strain GZ1), this protein is Cell division protein DivIB.